A 199-amino-acid chain; its full sequence is Holliday junction branch migration complex subunit RuvA (199 aa).

Residues 1–64 (MIARLTGMLA…EDAISLFGFR (64 aa)) are domain I. The segment at 65–143 (TVAEKEFFQV…KMDVAPSTKE (79 aa)) is domain II. The segment at 144–154 (AAPSEAPPEVA) is flexible linker. Residues 154–199 (ADDVASALVNLGYKEAVVRKVLAEMAIESGASTEAVLRQALKILMK) form a domain III region.

The protein belongs to the RuvA family. In terms of assembly, homotetramer. Forms an RuvA(8)-RuvB(12)-Holliday junction (HJ) complex. HJ DNA is sandwiched between 2 RuvA tetramers; dsDNA enters through RuvA and exits via RuvB. An RuvB hexamer assembles on each DNA strand where it exits the tetramer. Each RuvB hexamer is contacted by two RuvA subunits (via domain III) on 2 adjacent RuvB subunits; this complex drives branch migration. In the full resolvosome a probable DNA-RuvA(4)-RuvB(12)-RuvC(2) complex forms which resolves the HJ.

The protein resides in the cytoplasm. In terms of biological role, the RuvA-RuvB-RuvC complex processes Holliday junction (HJ) DNA during genetic recombination and DNA repair, while the RuvA-RuvB complex plays an important role in the rescue of blocked DNA replication forks via replication fork reversal (RFR). RuvA specifically binds to HJ cruciform DNA, conferring on it an open structure. The RuvB hexamer acts as an ATP-dependent pump, pulling dsDNA into and through the RuvAB complex. HJ branch migration allows RuvC to scan DNA until it finds its consensus sequence, where it cleaves and resolves the cruciform DNA. The protein is Holliday junction branch migration complex subunit RuvA of Geobacter metallireducens (strain ATCC 53774 / DSM 7210 / GS-15).